The sequence spans 628 residues: Phosphomethylpyrimidine synthase (628 aa).

Residues 1–14 (MTISDIGSQATTHT) show a composition bias toward polar residues. Positions 1 to 37 (MTISDIGSQATTHTPVKASKADALKTPAHRSETDARF) are disordered. The span at 19 to 37 (SKADALKTPAHRSETDARF) shows a compositional bias: basic and acidic residues. Substrate-binding positions include Asn260, Met289, Tyr318, His354, 374 to 376 (SRG), 415 to 418 (DGLR), and Glu454. His458 is a binding site for Zn(2+). Tyr481 provides a ligand contact to substrate. His522 lines the Zn(2+) pocket. The [4Fe-4S] cluster site is built by Cys602, Cys605, and Cys610.

It belongs to the ThiC family. As to quaternary structure, homodimer. The cofactor is [4Fe-4S] cluster.

The enzyme catalyses 5-amino-1-(5-phospho-beta-D-ribosyl)imidazole + S-adenosyl-L-methionine = 4-amino-2-methyl-5-(phosphooxymethyl)pyrimidine + CO + 5'-deoxyadenosine + formate + L-methionine + 3 H(+). It functions in the pathway cofactor biosynthesis; thiamine diphosphate biosynthesis. Catalyzes the synthesis of the hydroxymethylpyrimidine phosphate (HMP-P) moiety of thiamine from aminoimidazole ribotide (AIR) in a radical S-adenosyl-L-methionine (SAM)-dependent reaction. In Psychrobacter cryohalolentis (strain ATCC BAA-1226 / DSM 17306 / VKM B-2378 / K5), this protein is Phosphomethylpyrimidine synthase.